Reading from the N-terminus, the 272-residue chain is Cell shape-determining protein MreC (272 aa).

The Cytoplasmic portion of the chain corresponds to 1–8; that stretch reads MNRFKKSK. The chain crosses the membrane as a helical span at residues 9–29; it reads YVIIVFVTVLLVSALLATTYS. Residues 30–272 lie on the Extracellular side of the membrane; that stretch reads STIVTKLGDG…VDVIELVGNS (243 aa). Residues 64-112 adopt a coiled-coil conformation; that stretch reads LTRTYNENESLKKQLYQLEVKSNEVESLKTENEQLRQLLDMKSKLQATK.

Belongs to the MreC family. As to quaternary structure, homodimer. Interacts with a number of proteins in the elongasome, including PBP1a (pbpA), PBP1b, PBP2a, PBP2b (penA), StkP, MltG, MreD and RodZ.

Its subcellular location is the cell membrane. Involved in formation and maintenance of cell shape, probably part of the elongasome which synthesizes peripheral peptidoglycan (PG). In Streptococcus pneumoniae (strain ATCC BAA-255 / R6), this protein is Cell shape-determining protein MreC.